The chain runs to 114 residues: Nucleoid-associated protein MAB_0319 (114 aa).

The protein belongs to the YbaB/EbfC family. As to quaternary structure, homodimer.

The protein localises to the cytoplasm. The protein resides in the nucleoid. Its function is as follows. Binds to DNA and alters its conformation. May be involved in regulation of gene expression, nucleoid organization and DNA protection. This chain is Nucleoid-associated protein MAB_0319, found in Mycobacteroides abscessus (strain ATCC 19977 / DSM 44196 / CCUG 20993 / CIP 104536 / JCM 13569 / NCTC 13031 / TMC 1543 / L948) (Mycobacterium abscessus).